Consider the following 291-residue polypeptide: 3-methyl-2-oxobutanoate hydroxymethyltransferase (291 aa).

The segment covering 1 to 10 has biased composition (polar residues); it reads MTQLSAAQTP. Residues 1–20 form a disordered region; it reads MTQLSAAQTPQPKPADGNRA. Mg(2+) is bound by residues Asp71 and Asp110. 3-methyl-2-oxobutanoate is bound by residues 71 to 72, Asp110, and Lys140; that span reads DS. A Mg(2+)-binding site is contributed by Glu142. Residue Glu208 is the Proton acceptor of the active site.

Belongs to the PanB family. Homodecamer; pentamer of dimers. The cofactor is Mg(2+).

It is found in the cytoplasm. It carries out the reaction 3-methyl-2-oxobutanoate + (6R)-5,10-methylene-5,6,7,8-tetrahydrofolate + H2O = 2-dehydropantoate + (6S)-5,6,7,8-tetrahydrofolate. It functions in the pathway cofactor biosynthesis; (R)-pantothenate biosynthesis; (R)-pantoate from 3-methyl-2-oxobutanoate: step 1/2. Its function is as follows. Catalyzes the reversible reaction in which hydroxymethyl group from 5,10-methylenetetrahydrofolate is transferred onto alpha-ketoisovalerate to form ketopantoate. This chain is 3-methyl-2-oxobutanoate hydroxymethyltransferase, found in Streptomyces coelicolor (strain ATCC BAA-471 / A3(2) / M145).